The primary structure comprises 480 residues: Uridine/deoxyuridine transporter (480 aa).

14 helical membrane-spanning segments follow: residues 14–34 (VGSI…FQLN), 55–75 (SIAL…LFLP), 93–113 (LTMI…LMIG), 115–135 (ILQG…HVKV), 147–167 (ILTS…GWLV), 174–194 (SVFF…SFGT), 207–227 (WTGV…VNAL), 239–259 (WLLA…FWQV), 280–300 (GLLI…NGII), 320–340 (LVTL…SGFL), 358–378 (IIGI…LLLL), 382–402 (FIGI…GIVL), 417–437 (GMFN…PTVL), and 449–469 (ISGI…SFLI).

It belongs to the major facilitator superfamily. EmrB family.

It is found in the cell membrane. Responsible for the uptake of uridine and deoxyuridine. Not involved in purine nucleoside uptake. In Lactococcus lactis subsp. cremoris (strain MG1363), this protein is Uridine/deoxyuridine transporter.